Reading from the N-terminus, the 220-residue chain is Uracil-DNA glycosylase (220 aa).

Catalysis depends on Asp60, which acts as the Proton acceptor.

The protein belongs to the uracil-DNA glycosylase (UDG) superfamily. UNG family.

The protein localises to the cytoplasm. It catalyses the reaction Hydrolyzes single-stranded DNA or mismatched double-stranded DNA and polynucleotides, releasing free uracil.. Functionally, excises uracil residues from the DNA which can arise as a result of misincorporation of dUMP residues by DNA polymerase or due to deamination of cytosine. The sequence is that of Uracil-DNA glycosylase from Francisella tularensis subsp. tularensis (strain FSC 198).